A 224-amino-acid chain; its full sequence is 2-C-methyl-D-erythritol 4-phosphate cytidylyltransferase (224 aa).

The protein belongs to the IspD/TarI cytidylyltransferase family. IspD subfamily.

It carries out the reaction 2-C-methyl-D-erythritol 4-phosphate + CTP + H(+) = 4-CDP-2-C-methyl-D-erythritol + diphosphate. It participates in isoprenoid biosynthesis; isopentenyl diphosphate biosynthesis via DXP pathway; isopentenyl diphosphate from 1-deoxy-D-xylulose 5-phosphate: step 2/6. In terms of biological role, catalyzes the formation of 4-diphosphocytidyl-2-C-methyl-D-erythritol from CTP and 2-C-methyl-D-erythritol 4-phosphate (MEP). In Caldicellulosiruptor bescii (strain ATCC BAA-1888 / DSM 6725 / KCTC 15123 / Z-1320) (Anaerocellum thermophilum), this protein is 2-C-methyl-D-erythritol 4-phosphate cytidylyltransferase.